The chain runs to 883 residues: Phosphoenolpyruvate carboxylase (883 aa).

Active-site residues include histidine 138 and lysine 546.

This sequence belongs to the PEPCase type 1 family. The cofactor is Mg(2+).

It catalyses the reaction oxaloacetate + phosphate = phosphoenolpyruvate + hydrogencarbonate. Its function is as follows. Forms oxaloacetate, a four-carbon dicarboxylic acid source for the tricarboxylic acid cycle. The polypeptide is Phosphoenolpyruvate carboxylase (Salmonella dublin (strain CT_02021853)).